The primary structure comprises 426 residues: Cytochrome c biogenesis protein CcsB (426 aa).

3 consecutive transmembrane segments (helical) span residues Leu11–Ile31, Ser69–Arg89, and Val159–Val179.

Belongs to the Ccs1/CcsB family. As to quaternary structure, may interact with CcsA.

The protein localises to the cellular thylakoid membrane. Required during biogenesis of c-type cytochromes (cytochrome c6 and cytochrome f) at the step of heme attachment. This Synechococcus sp. (strain CC9902) protein is Cytochrome c biogenesis protein CcsB.